Reading from the N-terminus, the 216-residue chain is Probable nicotinate-nucleotide adenylyltransferase (216 aa).

Belongs to the NadD family.

The enzyme catalyses nicotinate beta-D-ribonucleotide + ATP + H(+) = deamido-NAD(+) + diphosphate. It participates in cofactor biosynthesis; NAD(+) biosynthesis; deamido-NAD(+) from nicotinate D-ribonucleotide: step 1/1. Its function is as follows. Catalyzes the reversible adenylation of nicotinate mononucleotide (NaMN) to nicotinic acid adenine dinucleotide (NaAD). The sequence is that of Probable nicotinate-nucleotide adenylyltransferase from Geobacter sulfurreducens (strain ATCC 51573 / DSM 12127 / PCA).